The sequence spans 321 residues: Protein FAM110C (321 aa).

Disordered regions lie at residues 1–84 (MRAL…APAP) and 111–203 (RGSG…SQSD). 2 stretches are compositionally biased toward basic and acidic residues: residues 15-46 (LLPR…DRAK) and 131-145 (GKDK…DEGK). Low complexity predominate over residues 169–181 (APAARSAAPSSVP). At Ser-241 the chain carries Phosphoserine.

It belongs to the FAM110 family. In terms of assembly, interacts with AKT1; the interaction is transient and follows AKT1 activation. Interacts with PPP2CA and alpha-tubulin. Detected in stomach, thyroid, trachea, adrenal gland and testis, and at low levels in prostate, ovary, intestine, colon, spinal cord and lymph node.

Its subcellular location is the cytoplasm. The protein localises to the cytoskeleton. It localises to the microtubule organizing center. It is found in the centrosome. The protein resides in the spindle pole. Its subcellular location is the nucleus. May play a role in microtubule organization. May play a role in cell spreading and cell migration of epithelial cells; the function may involve the AKT1 signaling pathway. This is Protein FAM110C (FAM110C) from Homo sapiens (Human).